The sequence spans 428 residues: C4-dicarboxylate transport protein (428 aa).

9 consecutive transmembrane segments (helical) span residues 7 to 27 (SLYF…IVAP), 40 to 60 (FIKL…VLGI), 75 to 95 (LALL…LLIV), 143 to 163 (AFAR…GIAL), 196 to 216 (PIGA…GSLF), 221 to 241 (LMAT…GAIA), 306 to 326 (IYLT…MTLG), 329 to 349 (FTLL…TGSG), and 351 to 371 (IVLA…LALI).

The protein belongs to the dicarboxylate/amino acid:cation symporter (DAACS) (TC 2.A.23) family.

Its subcellular location is the cell inner membrane. In terms of biological role, responsible for the transport of dicarboxylates such as succinate, fumarate, and malate from the periplasm across the membrane. The sequence is that of C4-dicarboxylate transport protein from Solibacter usitatus (strain Ellin6076).